Reading from the N-terminus, the 596-residue chain is NADH-quinone oxidoreductase subunit C/D (596 aa).

The tract at residues 1 to 186 (MTDLTAQEPA…SPFELTKAKQ (186 aa)) is NADH dehydrogenase I subunit C. Positions 210-596 (DFMFLNLGPN…IDFVMSDVDR (387 aa)) are NADH dehydrogenase I subunit D.

It in the N-terminal section; belongs to the complex I 30 kDa subunit family. The protein in the C-terminal section; belongs to the complex I 49 kDa subunit family. In terms of assembly, NDH-1 is composed of 13 different subunits. Subunits NuoB, CD, E, F, and G constitute the peripheral sector of the complex.

Its subcellular location is the cell inner membrane. The catalysed reaction is a quinone + NADH + 5 H(+)(in) = a quinol + NAD(+) + 4 H(+)(out). NDH-1 shuttles electrons from NADH, via FMN and iron-sulfur (Fe-S) centers, to quinones in the respiratory chain. The immediate electron acceptor for the enzyme in this species is believed to be ubiquinone. Couples the redox reaction to proton translocation (for every two electrons transferred, four hydrogen ions are translocated across the cytoplasmic membrane), and thus conserves the redox energy in a proton gradient. This Shigella flexneri serotype 5b (strain 8401) protein is NADH-quinone oxidoreductase subunit C/D.